A 302-amino-acid polypeptide reads, in one-letter code: Glycine--tRNA ligase alpha subunit (302 aa).

Belongs to the class-II aminoacyl-tRNA synthetase family. Tetramer of two alpha and two beta subunits.

The protein resides in the cytoplasm. It carries out the reaction tRNA(Gly) + glycine + ATP = glycyl-tRNA(Gly) + AMP + diphosphate. The protein is Glycine--tRNA ligase alpha subunit of Haemophilus ducreyi (strain 35000HP / ATCC 700724).